The following is an 83-amino-acid chain: Large ribosomal subunit protein bL31B (83 aa).

The protein belongs to the bacterial ribosomal protein bL31 family. Type B subfamily. In terms of assembly, part of the 50S ribosomal subunit.

Its function is as follows. Binds the 23S rRNA. The protein is Large ribosomal subunit protein bL31B of Hydrogenovibrio crunogenus (strain DSM 25203 / XCL-2) (Thiomicrospira crunogena).